Reading from the N-terminus, the 1108-residue chain is Receptor-type guanylate cyclase gcy-20 (1108 aa).

The N-terminal stretch at 1–15 (MRILLLLLQNILVFC) is a signal peptide. Residues 16 to 474 (QFLQTIKVGL…ECPADFVKEY (459 aa)) are Extracellular-facing. N-linked (GlcNAc...) asparagine glycosylation is found at N66, N131, N319, N341, N366, and N380. The helical transmembrane segment at 475-495 (LVYTIIAAFIVILALLAGCAG) threads the bilayer. The region spanning 483–803 (FIVILALLAG…IEQVRSHLNG (321 aa)) is the Protein kinase domain. ATP contacts are provided by residues 489-497 (LLAGCAGLL) and K571. Residues 496 to 1108 (LLYTMHMKRK…QAGDNNSETV (613 aa)) lie on the Cytoplasmic side of the membrane. A Guanylate cyclase domain is found at 876–1006 (TIFFSDVVQF…DAVNTASRME (131 aa)). A disordered region spans residues 1083-1108 (LEKNAEGSETSSLSVDQAGDNNSETV). Residues 1089 to 1108 (GSETSSLSVDQAGDNNSETV) show a composition bias toward polar residues.

It belongs to the adenylyl cyclase class-4/guanylyl cyclase family. Expressed asymmetrically in ASE left (ASEL) sensory neuron. Expressed in excretory gland and canal cell.

It localises to the cell membrane. The catalysed reaction is GTP = 3',5'-cyclic GMP + diphosphate. In terms of biological role, guanylate cyclase involved in the production of the second messenger cGMP. In Caenorhabditis elegans, this protein is Receptor-type guanylate cyclase gcy-20.